Reading from the N-terminus, the 334-residue chain is Malate dehydrogenase, mitochondrial (334 aa).

Residues M1–P17 constitute a mitochondrion transit peptide. Residues G24–G30 and D50 contribute to the NAD(+) site. R99 and R105 together coordinate substrate. Residues N112 and I135–N137 contribute to the NAD(+) site. Residues N137 and R171 each contribute to the substrate site. At S177 the chain carries Phosphoserine. Residue H195 is the Proton acceptor of the active site. The residue at position 199 (T199) is a Phosphothreonine. NAD(+) is bound at residue M245.

Belongs to the LDH/MDH superfamily. MDH type 1 family. As to quaternary structure, homodimer.

The protein localises to the mitochondrion matrix. It catalyses the reaction (S)-malate + NAD(+) = oxaloacetate + NADH + H(+). The chain is Malate dehydrogenase, mitochondrial (MDH1) from Saccharomyces cerevisiae (strain ATCC 204508 / S288c) (Baker's yeast).